Reading from the N-terminus, the 154-residue chain is Insulin-like peptide 1 (154 aa).

The N-terminal stretch at 1–29 is a signal peptide; sequence MFSQHNGAAVHGLRLQSLLIAAMLTAAMA. 3 disulfides stabilise this stretch: Cys-49–Cys-138, Cys-61–Cys-151, and Cys-137–Cys-142. The disordered stretch occupies residues 72–92; that stretch reads RESLLGNSDDDEDTEQEVQDD. Residues 73–122 constitute a propeptide, connecting peptide; sequence ESLLGNSDDDEDTEQEVQDDSSMWQTLDGAGYSFSPLLTNLYGSEVLIKM. Residues 79–91 are compositionally biased toward acidic residues; sequence SDDDEDTEQEVQD.

This sequence belongs to the insulin family. In terms of assembly, heterodimer of a B chain and an A chain linked by two disulfide bonds.

Its subcellular location is the secreted. Functionally, possible ligand of InR/insulin-like receptor. The protein is Insulin-like peptide 1 of Drosophila melanogaster (Fruit fly).